The chain runs to 509 residues: MQSWSRVYCTLAKRGHFNRIAHGLQGVSAVPLRTYADQPIDADVTVIGSGPGGYVAAIKAAQLGFKTVCIEKNETLGGTCLNVGCIPSKALLNNSHYYHMAHGKDFASRGIEMSEVRLNLEKMMEQKSNAVKALTGGIAHLFKQNKVVRVNGYGKITGKNQVTATKADGSTEVINTKNILIATGSEVTPFPGITIDEDTVVSSTGALSLKKVPEKMVVIGAGVIGVELGSVWQRLGADVTAVELLGHVGGIGIDMEVSKNFQRILQKQGFKFKLNTKVIGATKKSDGNIDVSIEAASGGKAEVITCDVLLVCIGRRPFTQNLGLEELGIELDPRGRIPVNTRFQTKIPNIYAIGDVVAGPMLAHKAEDEGIICVEGMAGGAVHIDYNCVPSVIYTHPEVAWVGKSEEQLKEEGIEYKVGKFPFAANSRAKTNADTDGMVKILGQKSTDRVLGAHIIGPGAGEMINEAALALEYGASCEDIARVCHAHPTLSEAFREANLAASFGKAINF.

Residues 1–35 (MQSWSRVYCTLAKRGHFNRIAHGLQGVSAVPLRTY) constitute a mitochondrion transit peptide. N6-acetyllysine; alternate is present on lysine 66. Position 66 is an N6-succinyllysine; alternate (lysine 66). FAD is bound by residues 71-80 (EKNETLGGTC) and lysine 89. A disulfide bridge connects residues cysteine 80 and cysteine 85. N6-acetyllysine; alternate is present on residues lysine 104, lysine 122, lysine 132, and lysine 143. Residues lysine 104, lysine 122, lysine 132, and lysine 143 each carry the N6-succinyllysine; alternate modification. Glycine 154 is a binding site for FAD. N6-succinyllysine is present on residues lysine 159 and lysine 166. 183 to 185 (TGS) contacts FAD. Residues 220–227 (GAGVIGVE) and glutamate 243 contribute to the NAD(+) site. N6-succinyllysine is present on residues lysine 273 and lysine 277. Residue valine 278 coordinates NAD(+). Serine 285 and serine 297 each carry phosphoserine. Position 314 (glycine 314) interacts with NAD(+). Position 346 is an N6-acetyllysine (lysine 346). FAD is bound by residues aspartate 355 and 361-364 (MLAH). Position 410 is an N6-acetyllysine; alternate (lysine 410). The residue at position 410 (lysine 410) is an N6-succinyllysine; alternate. N6-acetyllysine is present on residues lysine 417 and lysine 420. Lysine 430 carries the N6-succinyllysine modification. The active-site Proton acceptor is histidine 487. Serine 502 is modified (phosphoserine). N6-acetyllysine; alternate is present on lysine 505. Lysine 505 bears the N6-succinyllysine; alternate mark.

It belongs to the class-I pyridine nucleotide-disulfide oxidoreductase family. Homodimer. Part of the multimeric pyruvate dehydrogenase complex that contains multiple copies of pyruvate dehydrogenase (subunits PDHA (PDHA1 or PDHA2) and PDHB, E1), dihydrolipoamide acetyltransferase (DLAT, E2) and lipoamide dehydrogenase (DLD, E3). These subunits are bound to an inner core composed of about 48 DLAT and 12 PDHX molecules (by non covalent bonds). The 2-oxoglutarate dehydrogenase complex is composed of OGDH (2-oxoglutarate dehydrogenase; E1), DLST (dihydrolipoamide succinyltransferase; E2), DLD (dihydrolipoamide dehydrogenase; E3) and the assembly factor KGD4. It contains multiple copies of the three enzymatic components (E1, E2 and E3). In the nucleus, the 2-oxoglutarate dehydrogenase complex associates with KAT2A. Interacts with PDHX. Requires FAD as cofactor. In terms of processing, tyrosine phosphorylated. As to expression, expressed in heart (at protein level).

The protein resides in the mitochondrion matrix. It is found in the nucleus. The protein localises to the cell projection. It localises to the cilium. Its subcellular location is the flagellum. The protein resides in the cytoplasmic vesicle. It is found in the secretory vesicle. The protein localises to the acrosome. It catalyses the reaction N(6)-[(R)-dihydrolipoyl]-L-lysyl-[protein] + NAD(+) = N(6)-[(R)-lipoyl]-L-lysyl-[protein] + NADH + H(+). Functionally, lipoamide dehydrogenase is a component of the glycine cleavage system as well as an E3 component of three alpha-ketoacid dehydrogenase complexes (pyruvate-, alpha-ketoglutarate-, and branched-chain amino acid-dehydrogenase complex). The 2-oxoglutarate dehydrogenase complex is mainly active in the mitochondrion. A fraction of the 2-oxoglutarate dehydrogenase complex also localizes in the nucleus and is required for lysine succinylation of histones: associates with KAT2A on chromatin and provides succinyl-CoA to histone succinyltransferase KAT2A. In monomeric form may have additional moonlighting function as serine protease. Involved in the hyperactivation of spermatazoa during capacitation and in the spermatazoal acrosome reaction. This Sus scrofa (Pig) protein is Dihydrolipoyl dehydrogenase, mitochondrial (DLD).